The primary structure comprises 468 residues: MNVTSLFSFTSPAVKRLLGWKQGDEEEKWAEKAVDALVKKLKKKKGAMEELEKALSCPGQPSNCVTIPRSLDGRLQVSHRKGLPHVIYCRVWRWPDLQSHHELKPLECCEFPFGSKQKEVCINPYHYKRVESPVLPPVLVPRHSEYNPQHSLLAQFRNLGQNEPHMPLNATFPDSFQQPHSHPFAQYPNSSYPNSPGSSSSTYPHSPTSSDPGSPFQMPADTPPPAYLPPEDPMAQDGSQPMDTNMTNMTAPTLPAEINRGDVQAVAYEEPKHWCSIVYYELNNRVGERFHASSTSVLVDGFTDPSNNKNRFCLGLLSNVNRNSTIENTRRHIGKGVHLYYVGGEVYAECLSDSSIFVQSRNCNYHHGFHPTTVCKIPSGCSLKIFNNQEFAQLLAQSVNHGFETEYELTKMCTIRMSFVKGWGAEYHRQDVTSTPCWIEIHLHGPLQWLDKVLTQMGSPHNPISSVS.

Methionine 1 bears the N-acetylmethionine mark. One can recognise an MH1 domain in the interval 12 to 136 (PAVKRLLGWK…YKRVESPVLP (125 aa)). Positions 64, 109, 121, and 126 each coordinate Zn(2+). The interval 162 to 246 (NEPHMPLNAT…DGSQPMDTNM (85 aa)) is disordered. Positions 188 to 210 (PNSSYPNSPGSSSSTYPHSPTSS) are enriched in low complexity. Residues 221–232 (DTPPPAYLPPED) show a composition bias toward pro residues. A compositionally biased stretch (polar residues) spans 237–246 (DGSQPMDTNM). The 195-residue stretch at 274–468 (WCSIVYYELN…SPHNPISSVS (195 aa)) folds into the MH2 domain. Threonine 325 is subject to Phosphothreonine; by MINK1, TNIK and MAP4K4. Residues 421–431 (KGWGAEYHRQD) are L3 loop. Phosphoserine occurs at positions 466 and 468.

It belongs to the dwarfin/SMAD family. As to quaternary structure, found in a complex with SMAD4 and YY1. Interacts with HGS, NANOG and ZCCHC12. Upon C-terminus phosphorylation: forms trimers with another SMAD1 and the co-SMAD SMAD4. Interacts with PEBP2-alpha subunit, CREB-binding protein (CBP), p300, SMURF1, SMURF2, USP15 and HOXC8. Associates with ZNF423 or ZNF521 in response to BMP2 leading to activate transcription of BMP target genes. Interacts with SKOR1. Interacts (via MH2 domain) with LEMD3. Binding to LEMD3 results in at least a partial reduction of receptor-mediated phosphorylation. Forms a ternary complex with PSMB4 and OAZ1 before PSMB4 is incorporated into the 20S proteasome. Interacts (via MH2 domain) with FAM83G (via MH2 domain); in a SMAD4-independent manner. Interacts with ZC3H3. Interacts with TMEM119. Interacts (via MH1 and MH2 domains) with ZNF8. Interacts with RANBP3L; the interaction increases when SMAD1 is not phosphorylated and mediates SMAD1 nuclear export. Interacts with EGR1; this interaction inhibits SMAD1 dephosphorylation. Interacts with SMAD6. Interacts with YAP1. Interacts with MTMR4; negatively regulates BMP signaling through SMAD1 dephosphorylation and retention in endosomes. Post-translationally, phosphorylation of the C-terminal SVS motif by BMP type 1 receptor kinase activates SMAD1 by promoting dissociation from the receptor and trimerization with SMAD4. Phosphorylation by ERK2 MAP kinase in response to EGF or HGF prevents SMAD1 nuclear accumulation and transcriptional activity in response to BMP. Dephosphorylation, probably by PPM1A, induces its export from the nucleus to the cytoplasm. Dephosphorylation is inhibited by association with EGR1. Phosphorylation by CDK8/9 creates binding sites for YAP1, and subsequent phosphorylation by GSK3 switches off YAP1 binding and adds binding sites for SMURF1. Ubiquitinated by SMAD-specific E3 ubiquitin ligase SMURF1, leading to its degradation. Monoubiquitinated, leading to prevent DNA-binding. Deubiquitination by USP15 alleviates inhibition and promotes activation of TGF-beta target genes. Dephosphorylation, probably by PPM1A, induces its export from the nucleus to the cytoplasm. Phospho-SMAD1 is ubiquitinated by CHIP leading to disruption of the SMAD1-SMAD4 complex. As to expression, ubiquitous; present in liver, lung, stomach and spleen with lower level in heart, testes and skeletal muscle.

It localises to the cytoplasm. The protein localises to the nucleus. Its function is as follows. Transcriptional modulator that plays a role in various cellular processes, including embryonic development, cell differentiation, and tissue homeostasis. Upon BMP ligand binding to their receptors at the cell surface, is phosphorylated by activated type I BMP receptors (BMPRIs) and associates with SMAD4 to form an heteromeric complex which translocates into the nucleus acting as transcription factor. In turn, the hetero-trimeric complex recognizes cis-regulatory elements containing Smad Binding Elements (SBEs) to modulate the outcome of the signaling network. SMAD1/OAZ1/PSMB4 complex mediates the degradation of the CREBBP/EP300 repressor SNIP1. Positively regulates BMP4-induced expression of odontogenic development regulator MSX1 following IPO7-mediated nuclear import. This Rattus norvegicus (Rat) protein is Mothers against decapentaplegic homolog 1 (Smad1).